The following is a 211-amino-acid chain: Octanoyltransferase (211 aa).

The 176-residue stretch at 32–207 (PCTYDEIWFV…ELSKFLEIFI (176 aa)) folds into the BPL/LPL catalytic domain. Residues 71–78 (RGGQITYH), 138–140 (SLG), and 151–153 (GLA) contribute to the substrate site. C169 serves as the catalytic Acyl-thioester intermediate.

Belongs to the LipB family.

The protein resides in the cytoplasm. The enzyme catalyses octanoyl-[ACP] + L-lysyl-[protein] = N(6)-octanoyl-L-lysyl-[protein] + holo-[ACP] + H(+). Its pathway is protein modification; protein lipoylation via endogenous pathway; protein N(6)-(lipoyl)lysine from octanoyl-[acyl-carrier-protein]: step 1/2. Its function is as follows. Catalyzes the transfer of endogenously produced octanoic acid from octanoyl-acyl-carrier-protein onto the lipoyl domains of lipoate-dependent enzymes. Lipoyl-ACP can also act as a substrate although octanoyl-ACP is likely to be the physiological substrate. The sequence is that of Octanoyltransferase from Buchnera aphidicola subsp. Acyrthosiphon pisum (strain APS) (Acyrthosiphon pisum symbiotic bacterium).